The chain runs to 271 residues: Autophagy-related protein 5 (271 aa).

Residue Lys-145 forms a Glycyl lysine isopeptide (Lys-Gly) (interchain with G-Cter in ATG12) linkage.

The protein belongs to the ATG5 family. Conjugated with ATG12. Interacts with ATG10. The ATG5-ATG12 conjugate forms a complex with several units of ATG16. The ATG12-ATG5 conjugate also associates with ATG3. Post-translationally, conjugated to ATG12; which is essential for autophagy. Conjugation with ATG12 involves ATG7 as an E1-like activating enzyme and ATG10 as an E2-like conjugating enzyme.

It is found in the preautophagosomal structure membrane. In terms of biological role, involved in cytoplasm to vacuole transport (Cvt) and autophagic vesicle formation. Autophagy is essential for maintenance of amino acid levels and protein synthesis under nitrogen starvation. Required for selective autophagic degradation of the nucleus (nucleophagy). Also required for mitophagy, which eliminates defective or superfluous mitochondria in order to fulfill cellular energy requirements and prevent excess ROS production. Conjugation with ATG12, through a ubiquitin-like conjugating system involving ATG7 as an E1-like activating enzyme and ATG10 as an E2-like conjugating enzyme, is essential for its function. The ATG12-ATG5 conjugate acts as an E3-like enzyme which is required for lipidation of ATG8 and ATG8 association to the vesicle membranes. ATG12-ATG5 rearranges the ATG3 catalytic center and enhances its E2 activity. This chain is Autophagy-related protein 5, found in Kluyveromyces marxianus (strain DMKU3-1042 / BCC 29191 / NBRC 104275) (Yeast).